Consider the following 273-residue polypeptide: Flagellin FljN (273 aa).

This sequence belongs to the bacterial flagellin family. As to quaternary structure, in C.crescentus, the flagellar filament is composed of multiple flagellins of 29 kDa; 27 kDa and 25 kDa.

The protein localises to the secreted. It is found in the bacterial flagellum. Functionally, flagellin is the subunit protein which polymerizes to form the filaments of bacterial flagella. This chain is Flagellin FljN (fljN), found in Caulobacter vibrioides (strain ATCC 19089 / CIP 103742 / CB 15) (Caulobacter crescentus).